A 64-amino-acid polypeptide reads, in one-letter code: Prokaryotic ubiquitin-like protein Pup (64 aa).

A disordered region spans residues 1–37 (MAQEQTQRAGGGEDDETTGGDGSAGQERREKLAAETD). Residues 21–58 (DGSAGQERREKLAAETDDLLDEIDDVLEENAEDFVRAY) are ARC ATPase binding. The stretch at 24-52 (AGQERREKLAAETDDLLDEIDDVLEENAE) forms a coiled coil. A Deamidated glutamine modification is found at Q64. An Isoglutamyl lysine isopeptide (Gln-Lys) (interchain with K-? in acceptor proteins) cross-link involves residue Q64.

This sequence belongs to the prokaryotic ubiquitin-like protein family. In terms of assembly, strongly interacts with the proteasome-associated ATPase ARC through a hydrophobic interface; the interacting region of Pup lies in its C-terminal half. There is one Pup binding site per ARC hexamer ring. Post-translationally, is modified by deamidation of its C-terminal glutamine to glutamate by the deamidase Dop, a prerequisite to the subsequent pupylation process.

It participates in protein degradation; proteasomal Pup-dependent pathway. Functionally, protein modifier that is covalently attached to lysine residues of substrate proteins, thereby targeting them for proteasomal degradation. The tagging system is termed pupylation. The sequence is that of Prokaryotic ubiquitin-like protein Pup from Rhodococcus erythropolis (strain PR4 / NBRC 100887).